Here is a 410-residue protein sequence, read N- to C-terminus: Regulator of microtubule dynamics protein 2 (410 aa).

A helical membrane pass occupies residues 10-27; it reads IFGIMVGTAGISLLLLWY. Ser51 is subject to Phosphoserine. Residues 68-110 are a coiled coil; that stretch reads FQERQLQILEKLNELLTNMEELKEEIRFLKETVPKLEEYIQDE. Ser121 is subject to Phosphoserine. Residues 122–131 are compositionally biased toward basic residues; the sequence is PQHRARKRRL. Positions 122-151 are disordered; the sequence is PQHRARKRRLPTIQSSATSNSSEEAESEGG. At Thr139 the chain carries Phosphothreonine. Tyr152 carries the post-translational modification Phosphotyrosine. Phosphothreonine occurs at positions 154 and 157.

The protein belongs to the RMDN family. Interacts with microtubules.

The protein resides in the membrane. It localises to the cytoplasm. The protein localises to the cytoskeleton. Its subcellular location is the spindle. It is found in the spindle pole. This Macaca fascicularis (Crab-eating macaque) protein is Regulator of microtubule dynamics protein 2 (RMDN2).